The chain runs to 542 residues: ATP synthase subunit beta (542 aa).

Residues 1–50 (MAKTPAKAPAAAAKPAAVKKPAAPKAAAAPKAAAVATPAAKKPAAPKAAP) show a composition bias toward low complexity. The disordered stretch occupies residues 1-61 (MAKTPAKAPA…SKVAGTREKP (61 aa)). ATP is bound at residue 216–223 (GGAGVGKT).

This sequence belongs to the ATPase alpha/beta chains family. In terms of assembly, F-type ATPases have 2 components, CF(1) - the catalytic core - and CF(0) - the membrane proton channel. CF(1) has five subunits: alpha(3), beta(3), gamma(1), delta(1), epsilon(1). CF(0) has three main subunits: a(1), b(2) and c(9-12). The alpha and beta chains form an alternating ring which encloses part of the gamma chain. CF(1) is attached to CF(0) by a central stalk formed by the gamma and epsilon chains, while a peripheral stalk is formed by the delta and b chains.

The protein localises to the cell inner membrane. It carries out the reaction ATP + H2O + 4 H(+)(in) = ADP + phosphate + 5 H(+)(out). Its function is as follows. Produces ATP from ADP in the presence of a proton gradient across the membrane. The catalytic sites are hosted primarily by the beta subunits. The chain is ATP synthase subunit beta from Caulobacter sp. (strain K31).